The chain runs to 21 residues: 78 kDa dihydrolipoyllysine-residue acetyltransferase component of pyruvate dehydrogenase complex (21 aa).

The protein belongs to the 2-oxoacid dehydrogenase family. As to quaternary structure, forms a 60-polypeptide structural core. The cofactor is (R)-lipoate.

Its subcellular location is the mitochondrion matrix. It catalyses the reaction N(6)-[(R)-dihydrolipoyl]-L-lysyl-[protein] + acetyl-CoA = N(6)-[(R)-S(8)-acetyldihydrolipoyl]-L-lysyl-[protein] + CoA. The pyruvate dehydrogenase complex catalyzes the overall conversion of pyruvate to acetyl-CoA and CO(2). It contains multiple copies of three enzymatic components: pyruvate dehydrogenase (E1), dihydrolipoamide acetyltransferase (E2) and lipoamide dehydrogenase (E3). The chain is 78 kDa dihydrolipoyllysine-residue acetyltransferase component of pyruvate dehydrogenase complex from Solanum tuberosum (Potato).